A 377-amino-acid chain; its full sequence is Queuine tRNA-ribosyltransferase (377 aa).

Residue aspartate 89 is the Proton acceptor of the active site. Substrate contacts are provided by residues 89 to 93 (DSGGF), aspartate 143, glutamine 187, and glycine 214. Residues 245-251 (GVGKPED) are RNA binding. Aspartate 264 functions as the Nucleophile in the catalytic mechanism. The segment at 269-273 (TRNAR) is RNA binding; important for wobble base 34 recognition. Positions 302, 304, 307, and 333 each coordinate Zn(2+).

It belongs to the queuine tRNA-ribosyltransferase family. In terms of assembly, homodimer. Within each dimer, one monomer is responsible for RNA recognition and catalysis, while the other monomer binds to the replacement base PreQ1. It depends on Zn(2+) as a cofactor.

It carries out the reaction 7-aminomethyl-7-carbaguanine + guanosine(34) in tRNA = 7-aminomethyl-7-carbaguanosine(34) in tRNA + guanine. The protein operates within tRNA modification; tRNA-queuosine biosynthesis. Its function is as follows. Catalyzes the base-exchange of a guanine (G) residue with the queuine precursor 7-aminomethyl-7-deazaguanine (PreQ1) at position 34 (anticodon wobble position) in tRNAs with GU(N) anticodons (tRNA-Asp, -Asn, -His and -Tyr). Catalysis occurs through a double-displacement mechanism. The nucleophile active site attacks the C1' of nucleotide 34 to detach the guanine base from the RNA, forming a covalent enzyme-RNA intermediate. The proton acceptor active site deprotonates the incoming PreQ1, allowing a nucleophilic attack on the C1' of the ribose to form the product. After dissociation, two additional enzymatic reactions on the tRNA convert PreQ1 to queuine (Q), resulting in the hypermodified nucleoside queuosine (7-(((4,5-cis-dihydroxy-2-cyclopenten-1-yl)amino)methyl)-7-deazaguanosine). The chain is Queuine tRNA-ribosyltransferase from Shewanella piezotolerans (strain WP3 / JCM 13877).